The following is a 339-amino-acid chain: Ferrochelatase (339 aa).

Fe cation contacts are provided by His202 and Glu283.

This sequence belongs to the ferrochelatase family.

The protein localises to the cytoplasm. The enzyme catalyses heme b + 2 H(+) = protoporphyrin IX + Fe(2+). It participates in porphyrin-containing compound metabolism; protoheme biosynthesis; protoheme from protoporphyrin-IX: step 1/1. In terms of biological role, catalyzes the ferrous insertion into protoporphyrin IX. The polypeptide is Ferrochelatase (Psychrobacter arcticus (strain DSM 17307 / VKM B-2377 / 273-4)).